Consider the following 143-residue polypeptide: Large ribosomal subunit protein uL11 (143 aa).

It belongs to the universal ribosomal protein uL11 family. In terms of assembly, part of the ribosomal stalk of the 50S ribosomal subunit. Interacts with L10 and the large rRNA to form the base of the stalk. L10 forms an elongated spine to which L12 dimers bind in a sequential fashion forming a multimeric L10(L12)X complex. Post-translationally, one or more lysine residues are methylated.

Functionally, forms part of the ribosomal stalk which helps the ribosome interact with GTP-bound translation factors. This Bifidobacterium adolescentis (strain ATCC 15703 / DSM 20083 / NCTC 11814 / E194a) protein is Large ribosomal subunit protein uL11.